A 1548-amino-acid polypeptide reads, in one-letter code: Dicer-like protein 1 (1548 aa).

A compositionally biased stretch (basic and acidic residues) spans 1 to 41 (MGDPAAHEMADLERGFSSEDDAEYRSGDDEASKFVENEPSK). The segment at 1–48 (MGDPAAHEMADLERGFSSEDDAEYRSGDDEASKFVENEPSKRGKISQK) is disordered. The region spanning 106 to 289 (LFERAKQQNT…QAAIELEGLL (184 aa)) is the Helicase ATP-binding domain. Residue 119-126 (LDTGSGKT) coordinates ATP. The DEAH box signature appears at 232 to 235 (DEAH). In terms of domain architecture, Helicase C-terminal spans 428–589 (TLSKLLEEYF…FCNTQPEDRL (162 aa)). The Dicer dsRNA-binding fold domain maps to 624 to 718 (SLPILQAFLN…RSKFVEKRHV (95 aa)). In terms of domain architecture, PAZ spans 871 to 1006 (PLLRHVADRD…FVLEPMRISP (136 aa)). 2 RNase III domains span residues 1051-1197 (LTKD…MTTR) and 1248-1411 (AQKI…VDSK). The Mg(2+) site is built by E1288, D1397, and E1400. In terms of domain architecture, DRBM spans 1445-1518 (TFFTQYVFET…ARKALDKLRS (74 aa)). Zn(2+) contacts are provided by C1457, H1489, C1530, and C1532.

It belongs to the helicase family. Dicer subfamily. The cofactor is Mg(2+). Requires Mn(2+) as cofactor.

Functionally, dicer-like endonuclease involved in cleaving double-stranded RNA in the RNA interference (RNAi) pathway. Produces 21 to 25 bp dsRNAs (siRNAs) which target the selective destruction of homologous RNAs leading to sequence-specific suppression of gene expression, called post-transcriptional gene silencing (PTGS). Part of a broad host defense response against viral infection and transposons. This is Dicer-like protein 1 (DCL-1) from Cryphonectria parasitica (Chestnut blight fungus).